Consider the following 610-residue polypeptide: Elongation factor 4 (610 aa).

Positions 15 to 197 (KSIRNFSIIA…RIINDIPYPK (183 aa)) constitute a tr-type G domain. Residues 27 to 32 (DHGKST) and 144 to 147 (NKID) each bind GTP.

It belongs to the TRAFAC class translation factor GTPase superfamily. Classic translation factor GTPase family. LepA subfamily.

It is found in the cell membrane. It carries out the reaction GTP + H2O = GDP + phosphate + H(+). In terms of biological role, required for accurate and efficient protein synthesis under certain stress conditions. May act as a fidelity factor of the translation reaction, by catalyzing a one-codon backward translocation of tRNAs on improperly translocated ribosomes. Back-translocation proceeds from a post-translocation (POST) complex to a pre-translocation (PRE) complex, thus giving elongation factor G a second chance to translocate the tRNAs correctly. Binds to ribosomes in a GTP-dependent manner. This is Elongation factor 4 from Buchnera aphidicola subsp. Acyrthosiphon pisum (strain 5A).